The sequence spans 194 residues: uncharacterized protein (194 aa).

An HTH tetR-type domain is found at 2 to 62 (QGPRERMVVS…CEAVDYAGEH (61 aa)). The segment at residues 25–44 (AISDVLQHSGAPRGSAYHYF) is a DNA-binding region (H-T-H motif).

This is an uncharacterized protein from Mycobacterium tuberculosis (strain CDC 1551 / Oshkosh).